The sequence spans 437 residues: Adenosylmethionine-8-amino-7-oxononanoate aminotransferase (437 aa).

Trp-64 contacts substrate. Position 124–125 (Gly-124–Ser-125) interacts with pyridoxal 5'-phosphate. Substrate is bound at residue Tyr-157. A pyridoxal 5'-phosphate-binding site is contributed by Asp-254. Positions 283 and 316 each coordinate substrate. Lys-283 is subject to N6-(pyridoxal phosphate)lysine. Pro-317–Thr-318 contacts pyridoxal 5'-phosphate. A substrate-binding site is contributed by Arg-400.

It belongs to the class-III pyridoxal-phosphate-dependent aminotransferase family. BioA subfamily. As to quaternary structure, homodimer. The cofactor is pyridoxal 5'-phosphate.

It is found in the cytoplasm. It carries out the reaction (8S)-8-amino-7-oxononanoate + S-adenosyl-L-methionine = S-adenosyl-4-methylsulfanyl-2-oxobutanoate + (7R,8S)-7,8-diammoniononanoate. The protein operates within cofactor biosynthesis; biotin biosynthesis; 7,8-diaminononanoate from 8-amino-7-oxononanoate (SAM route): step 1/1. Its function is as follows. Catalyzes the transfer of the alpha-amino group from S-adenosyl-L-methionine (SAM) to 7-keto-8-aminopelargonic acid (KAPA) to form 7,8-diaminopelargonic acid (DAPA). It is the only aminotransferase known to utilize SAM as an amino donor. This chain is Adenosylmethionine-8-amino-7-oxononanoate aminotransferase (bioA), found in Mycobacterium tuberculosis (strain CDC 1551 / Oshkosh).